The following is a 933-amino-acid chain: uncharacterized protein (933 aa).

The segment covering 1–28 (MNGNLPHIQIQSPKNSLDHLNNGRQATH) has biased composition (polar residues). 3 disordered regions span residues 1 to 135 (MNGN…GESD), 173 to 194 (MDNE…NAAD), and 252 to 275 (ATDF…ADAQ). Over residues 29 to 47 (NFEHGKPGDREEANGHADA) the composition is skewed to basic and acidic residues. Residues 49 to 59 (SSSGRSRYLSS) are compositionally biased toward low complexity. 2 stretches are compositionally biased toward polar residues: residues 87–101 (TLSF…SNTH) and 108–135 (NRSS…GESD). Over residues 173–182 (MDNESSEEER) the composition is skewed to acidic residues. The span at 264-275 (EPSSSRHTADAQ) shows a compositional bias: polar residues. WD repeat units lie at residues 314–353 (SSNN…HARS), 385–423 (GHTA…CLCC), 425–465 (EHSD…VSFW), 467–506 (ELPE…FRTQ), 517–563 (AKGS…LELK), 568–607 (ANAQ…MHKT), 617–657 (ASVR…SVIS), and 665–710 (PSLR…AARK). The residue at position 722 (serine 722) is a Phosphoserine. Residues 756 to 796 (NASQITNNENNGNDDIKKGDEPEEEHVGLRKNSTQEKNANL) are disordered. A compositionally biased stretch (polar residues) spans 757–768 (ASQITNNENNGN). The span at 769-783 (DDIKKGDEPEEEHVG) shows a compositional bias: basic and acidic residues.

The protein localises to the endoplasmic reticulum. The protein resides in the nucleus. This is an uncharacterized protein from Schizosaccharomyces pombe (strain 972 / ATCC 24843) (Fission yeast).